Reading from the N-terminus, the 345-residue chain is UPF0324 membrane protein HH_1161 (345 aa).

10 helical membrane-spanning segments follow: residues 7 to 29 (GFLY…SATL), 33 to 50 (LSPL…SPFY), 90 to 112 (LGLN…AIFI), 122 to 141 (ISLL…ILAL), 154 to 176 (VALG…IYYA), 186 to 208 (WGIF…AISP), 215 to 237 (IIVK…YIIF), 262 to 281 (LYIP…NSFI), 293 to 312 (FASK…QIDW), and 322 to 344 (TFAL…VYIM).

The protein belongs to the UPF0324 family.

It localises to the cell membrane. This chain is UPF0324 membrane protein HH_1161, found in Helicobacter hepaticus (strain ATCC 51449 / 3B1).